We begin with the raw amino-acid sequence, 1357 residues long: DNA-directed RNA polymerase subunit beta (1357 aa).

The protein belongs to the RNA polymerase beta chain family. The RNAP catalytic core consists of 2 alpha, 1 beta, 1 beta' and 1 omega subunit. When a sigma factor is associated with the core the holoenzyme is formed, which can initiate transcription.

The enzyme catalyses RNA(n) + a ribonucleoside 5'-triphosphate = RNA(n+1) + diphosphate. DNA-dependent RNA polymerase catalyzes the transcription of DNA into RNA using the four ribonucleoside triphosphates as substrates. This Pseudomonas fluorescens (strain SBW25) protein is DNA-directed RNA polymerase subunit beta.